Consider the following 603-residue polypeptide: Probable potassium transport system protein Kup (603 aa).

Transmembrane regions (helical) follow at residues 15–35, 43–63, 94–114, 135–155, 163–183, 209–229, 244–264, 283–303, 336–356, 365–385, 390–410, and 415–435; these read GLVF…IFLL, IIGV…VEYA, VAFV…DGVI, NIGQ…LFSV, ITWV…FSGI, GIIG…GEAL, AWRF…AFLI, ILYI…SQAM, IYIS…MLIF, AYGL…TSIF, NITK…FLLS, and IPHG…LILI.

Belongs to the HAK/KUP transporter (TC 2.A.72) family.

The protein localises to the cell membrane. It carries out the reaction K(+)(in) + H(+)(in) = K(+)(out) + H(+)(out). Transport of potassium into the cell. Likely operates as a K(+):H(+) symporter. This is Probable potassium transport system protein Kup from Methanosarcina barkeri (strain Fusaro / DSM 804).